Consider the following 251-residue polypeptide: Imidazole glycerol phosphate synthase subunit HisF (251 aa).

Catalysis depends on residues aspartate 11 and aspartate 130.

Belongs to the HisA/HisF family. Heterodimer of HisH and HisF.

It localises to the cytoplasm. It catalyses the reaction 5-[(5-phospho-1-deoxy-D-ribulos-1-ylimino)methylamino]-1-(5-phospho-beta-D-ribosyl)imidazole-4-carboxamide + L-glutamine = D-erythro-1-(imidazol-4-yl)glycerol 3-phosphate + 5-amino-1-(5-phospho-beta-D-ribosyl)imidazole-4-carboxamide + L-glutamate + H(+). It functions in the pathway amino-acid biosynthesis; L-histidine biosynthesis; L-histidine from 5-phospho-alpha-D-ribose 1-diphosphate: step 5/9. Functionally, IGPS catalyzes the conversion of PRFAR and glutamine to IGP, AICAR and glutamate. The HisF subunit catalyzes the cyclization activity that produces IGP and AICAR from PRFAR using the ammonia provided by the HisH subunit. This Pelodictyon phaeoclathratiforme (strain DSM 5477 / BU-1) protein is Imidazole glycerol phosphate synthase subunit HisF.